A 203-amino-acid chain; its full sequence is Recombination protein RecR (203 aa).

The segment at 56–71 (CAVCGNVSDDERCRIC) adopts a C4-type zinc-finger fold. The Toprim domain occupies 79-179 (ALVCVVEEPK…TVTRIASGLP (101 aa)).

It belongs to the RecR family.

Its function is as follows. May play a role in DNA repair. It seems to be involved in an RecBC-independent recombinational process of DNA repair. It may act with RecF and RecO. The polypeptide is Recombination protein RecR (Mycobacterium ulcerans (strain Agy99)).